The chain runs to 180 residues: Large ribosomal subunit protein uL6c (180 aa).

Belongs to the universal ribosomal protein uL6 family. Part of the 50S ribosomal subunit.

It is found in the plastid. The protein localises to the chloroplast. Binds 23S rRNA. The polypeptide is Large ribosomal subunit protein uL6c (rpl6) (Pyropia yezoensis (Susabi-nori)).